Here is an 801-residue protein sequence, read N- to C-terminus: Na(+)/H(+) antiporter subunit A1 (801 aa).

The next 19 membrane-spanning stretches (helical) occupy residues 1–21, 28–48, 79–99, 117–137, 166–186, 206–226, 265–285, 300–320, 337–357, 373–393, 427–447, 472–492, 522–542, 591–611, 623–643, 646–666, 671–691, 707–727, and 764–784; these read MSLLHIAVILPLIFALIIPIL, IHLGWFVLPVPIVIFIYMLTL, LGLLFSLLISGIGSLVVLYSI, LFMGAMLGVVLSDNVIILYLF, LIITVFGGLSLLGGIILLAIP, PFFIFAMILIMIGAFTKSAQF, IFAASQGWVWTVTLVGLITLF, ILAFSTVSQLGMIMAMLGIGA, FTAAIFHLINHATFKGALFMI, LGGLLTIMPISFTITVITALS, LGYLFPIIGIVGSVFTFVYSI, ILMLLSPAILATLVIVLGLFP, GLTPAFLSTLVIYILGILLIV, LVIIFGALILLTFVTIFSVPF, IFEVCIVILLLSAAFLILFAK, LFSIIMLSAVGYAVSVLFIFF, LALTQFVVESISTALFLLCFY, LTNALIAGGVGLSVIIIGLIA, and MDTLFESSVLGIAGLAVYTMI.

The protein belongs to the CPA3 antiporters (TC 2.A.63) subunit A family. As to quaternary structure, may form a heterooligomeric complex that consists of seven subunits: mnhA1, mnhB1, mnhC1, mnhD1, mnhE1, mnhF1 and mnhG1.

Its subcellular location is the cell membrane. Functionally, mnh complex is a Na(+)/H(+) antiporter involved in Na(+) excretion. The sequence is that of Na(+)/H(+) antiporter subunit A1 (mnhA1) from Staphylococcus aureus (strain Mu3 / ATCC 700698).